A 327-amino-acid polypeptide reads, in one-letter code: Methionyl-tRNA formyltransferase (327 aa).

117–120 (SLLP) contacts (6S)-5,6,7,8-tetrahydrofolate.

It belongs to the Fmt family.

It carries out the reaction L-methionyl-tRNA(fMet) + (6R)-10-formyltetrahydrofolate = N-formyl-L-methionyl-tRNA(fMet) + (6S)-5,6,7,8-tetrahydrofolate + H(+). Functionally, attaches a formyl group to the free amino group of methionyl-tRNA(fMet). The formyl group appears to play a dual role in the initiator identity of N-formylmethionyl-tRNA by promoting its recognition by IF2 and preventing the misappropriation of this tRNA by the elongation apparatus. In Delftia acidovorans (strain DSM 14801 / SPH-1), this protein is Methionyl-tRNA formyltransferase.